Consider the following 258-residue polypeptide: MGVAIRVIPCLDVDNGRVVKGVNFENLRDAGDPVELAKRYDEEGADELTFLDVTASKHGRGTMLDVVRRTADQVFIPLTVGGGVRSEEDVDQLLRAGADKVSVNTSAIARPELLSELSKRFGAQCIVLSVDARRVPEGGTPQPSGFEVTTHGGSKSAELDAIEWAKRGEELGVGEILLNSMDGDGTKNGFDLELLEKVRAAVSIPVIASGGAGKAEHFPPAVAAGANAVLAATIFHFREVTIAEVKGAIKDAGFEVRK.

Catalysis depends on residues Asp12 and Asp131.

It belongs to the HisA/HisF family. As to quaternary structure, heterodimer of HisH and HisF.

The protein resides in the cytoplasm. It catalyses the reaction 5-[(5-phospho-1-deoxy-D-ribulos-1-ylimino)methylamino]-1-(5-phospho-beta-D-ribosyl)imidazole-4-carboxamide + L-glutamine = D-erythro-1-(imidazol-4-yl)glycerol 3-phosphate + 5-amino-1-(5-phospho-beta-D-ribosyl)imidazole-4-carboxamide + L-glutamate + H(+). The protein operates within amino-acid biosynthesis; L-histidine biosynthesis; L-histidine from 5-phospho-alpha-D-ribose 1-diphosphate: step 5/9. In terms of biological role, IGPS catalyzes the conversion of PRFAR and glutamine to IGP, AICAR and glutamate. The HisF subunit catalyzes the cyclization activity that produces IGP and AICAR from PRFAR using the ammonia provided by the HisH subunit. The protein is Imidazole glycerol phosphate synthase subunit HisF of Corynebacterium glutamicum (strain R).